The chain runs to 626 residues: Chaperone protein HtpG (626 aa).

An a; substrate-binding region spans residues 1–341; the sequence is MAKREFKAES…SEDLSLNISR (341 aa). Positions 342-552 are b; the sequence is EMLQHDRQLK…DGEVTIEMEK (211 aa). The c stretch occupies residues 553–626; it reads ILNAMPDNQH…FTNDICKVMA (74 aa).

This sequence belongs to the heat shock protein 90 family. In terms of assembly, homodimer.

The protein resides in the cytoplasm. Molecular chaperone. Has ATPase activity. This chain is Chaperone protein HtpG, found in Bacillus licheniformis (strain ATCC 14580 / DSM 13 / JCM 2505 / CCUG 7422 / NBRC 12200 / NCIMB 9375 / NCTC 10341 / NRRL NRS-1264 / Gibson 46).